Reading from the N-terminus, the 242-residue chain is GDSL esterase/lipase At5g62930 (242 aa).

Ser-11 functions as the Nucleophile in the catalytic mechanism. A disordered region spans residues Pro-223–Leu-242.

The protein belongs to the 'GDSL' lipolytic enzyme family.

The chain is GDSL esterase/lipase At5g62930 from Arabidopsis thaliana (Mouse-ear cress).